A 218-amino-acid chain; its full sequence is Ribose-5-phosphate isomerase A (218 aa).

Residues threonine 28–threonine 31, aspartate 81–aspartate 84, and lysine 94–glycine 97 contribute to the substrate site. Catalysis depends on glutamate 103, which acts as the Proton acceptor. Lysine 121 contributes to the substrate binding site.

It belongs to the ribose 5-phosphate isomerase family. As to quaternary structure, homodimer.

The enzyme catalyses aldehydo-D-ribose 5-phosphate = D-ribulose 5-phosphate. It functions in the pathway carbohydrate degradation; pentose phosphate pathway; D-ribose 5-phosphate from D-ribulose 5-phosphate (non-oxidative stage): step 1/1. Functionally, catalyzes the reversible conversion of ribose-5-phosphate to ribulose 5-phosphate. The polypeptide is Ribose-5-phosphate isomerase A (Colwellia psychrerythraea (strain 34H / ATCC BAA-681) (Vibrio psychroerythus)).